The following is a 366-amino-acid chain: Phospho-N-acetylmuramoyl-pentapeptide-transferase (366 aa).

Helical transmembrane passes span 27–47 (AALFTSALIVFLFGPTIINSL), 71–91 (TPTMGGLMILAGIVGASLLWA), 93–113 (LSNVYVVATLLVTLGFGAIGF), 134–154 (LGIEFVIAGIAVYFMMRTALA), 174–194 (FLINLGIMFVVFGGFVIVGAG), 205–225 (GLAIVPVMIAAASFGVIAYLA), 245–265 (LAVVLGAVIGAGLGFLWFNAP), 268–288 (AIFMGDTGSLALGGTIGTVAV), 294–314 (IVMAIIGGLFVMETLSVIIQV), and 343–363 (QVVIRFWIIAVGLALLGLSTL).

Belongs to the glycosyltransferase 4 family. MraY subfamily. The cofactor is Mg(2+).

The protein resides in the cell inner membrane. The enzyme catalyses UDP-N-acetyl-alpha-D-muramoyl-L-alanyl-gamma-D-glutamyl-meso-2,6-diaminopimeloyl-D-alanyl-D-alanine + di-trans,octa-cis-undecaprenyl phosphate = di-trans,octa-cis-undecaprenyl diphospho-N-acetyl-alpha-D-muramoyl-L-alanyl-D-glutamyl-meso-2,6-diaminopimeloyl-D-alanyl-D-alanine + UMP. It participates in cell wall biogenesis; peptidoglycan biosynthesis. Its function is as follows. Catalyzes the initial step of the lipid cycle reactions in the biosynthesis of the cell wall peptidoglycan: transfers peptidoglycan precursor phospho-MurNAc-pentapeptide from UDP-MurNAc-pentapeptide onto the lipid carrier undecaprenyl phosphate, yielding undecaprenyl-pyrophosphoryl-MurNAc-pentapeptide, known as lipid I. The sequence is that of Phospho-N-acetylmuramoyl-pentapeptide-transferase from Rhizobium etli (strain ATCC 51251 / DSM 11541 / JCM 21823 / NBRC 15573 / CFN 42).